The primary structure comprises 102 residues: Large ribosomal subunit protein bL21 (102 aa).

The protein belongs to the bacterial ribosomal protein bL21 family. Part of the 50S ribosomal subunit. Contacts protein L20.

In terms of biological role, this protein binds to 23S rRNA in the presence of protein L20. This Listeria innocua serovar 6a (strain ATCC BAA-680 / CLIP 11262) protein is Large ribosomal subunit protein bL21.